The chain runs to 96 residues: Protein Vpr (96 aa).

Positions 1-42 (MEQAPEDQGPQREPYNEWTLELLEELKNEAVRHFPRIWLHSL) are homooligomerization. A phosphoserine; by host mark is found at S79, S94, and S96.

The protein belongs to the HIV-1 VPR protein family. Homooligomer, may form homodimer. Interacts with p6-gag region of the Pr55 Gag precursor protein through a (Leu-X-X)4 motif near the C-terminus of the P6gag protein. Interacts with host UNG. May interact with host RAD23A/HHR23A. Interacts with host VPRBP/DCAF1, leading to hijack the CUL4A-RBX1-DDB1-DCAF1/VPRBP complex, mediating ubiquitination of host proteins such as TERT and ZGPAT and arrest of the cell cycle in G2 phase. In terms of processing, phosphorylated on several residues by host. These phosphorylations regulate VPR activity for the nuclear import of the HIV-1 pre-integration complex.

The protein resides in the virion. Its subcellular location is the host nucleus. It is found in the host extracellular space. Functionally, during virus replication, may deplete host UNG protein, and incude G2-M cell cycle arrest. Acts by targeting specific host proteins for degradation by the 26S proteasome, through association with the cellular CUL4A-DDB1 E3 ligase complex by direct interaction with host VPRPB/DCAF-1. Cell cycle arrest reportedly occurs within hours of infection and is not blocked by antiviral agents, suggesting that it is initiated by the VPR carried into the virion. Additionally, VPR induces apoptosis in a cell cycle dependent manner suggesting that these two effects are mechanistically linked. Detected in the serum and cerebrospinal fluid of AIDS patient, VPR may also induce cell death to bystander cells. During virus entry, plays a role in the transport of the viral pre-integration (PIC) complex to the host nucleus. This function is crucial for viral infection of non-dividing macrophages. May act directly at the nuclear pore complex, by binding nucleoporins phenylalanine-glycine (FG)-repeat regions. The sequence is that of Protein Vpr from Homo sapiens (Human).